A 657-amino-acid polypeptide reads, in one-letter code: UvrABC system protein B (657 aa).

Residues 23 to 414 (KSIKKGNKYQ…KENIFHQIMR (392 aa)) enclose the Helicase ATP-binding domain. 36–43 (GVTGSGKT) serves as a coordination point for ATP. The Beta-hairpin motif lies at 89 to 112 (YYDYYQPEAYIPRTDVFIEKDSST). In terms of domain architecture, Helicase C-terminal spans 431 to 593 (QVEILFDEAK…ITPTSVKRHI (163 aa)). In terms of domain architecture, UVR spans 622-657 (AKLVKELRKQMLEAAKALEFEKAAAIRDEINKLRDL).

This sequence belongs to the UvrB family. As to quaternary structure, forms a heterotetramer with UvrA during the search for lesions. Interacts with UvrC in an incision complex.

The protein resides in the cytoplasm. In terms of biological role, the UvrABC repair system catalyzes the recognition and processing of DNA lesions. A damage recognition complex composed of 2 UvrA and 2 UvrB subunits scans DNA for abnormalities. Upon binding of the UvrA(2)B(2) complex to a putative damaged site, the DNA wraps around one UvrB monomer. DNA wrap is dependent on ATP binding by UvrB and probably causes local melting of the DNA helix, facilitating insertion of UvrB beta-hairpin between the DNA strands. Then UvrB probes one DNA strand for the presence of a lesion. If a lesion is found the UvrA subunits dissociate and the UvrB-DNA preincision complex is formed. This complex is subsequently bound by UvrC and the second UvrB is released. If no lesion is found, the DNA wraps around the other UvrB subunit that will check the other stand for damage. In Campylobacter jejuni subsp. jejuni serotype O:2 (strain ATCC 700819 / NCTC 11168), this protein is UvrABC system protein B.